An 893-amino-acid polypeptide reads, in one-letter code: DNA gyrase subunit A (893 aa).

Residues 35–501 (LPDVRDGLKP…GLEDLEDEDL (467 aa)) form the Topo IIA-type catalytic domain. Tyr-123 functions as the O-(5'-phospho-DNA)-tyrosine intermediate in the catalytic mechanism. The GyrA-box motif lies at 528 to 534 (QNRGGRG). Residues 810–893 (VNEEDDNEEN…ASDNEEDSDE (84 aa)) are disordered. Composition is skewed to acidic residues over residues 812-821 (EEDDNEENAD) and 852-862 (DAEMESVESPE). Residues 863 to 879 (NDDRIDIRQDFMDRVNE) are compositionally biased toward basic and acidic residues. The span at 880–893 (DIESASDNEEDSDE) shows a compositional bias: acidic residues.

Belongs to the type II topoisomerase GyrA/ParC subunit family. In terms of assembly, heterotetramer, composed of two GyrA and two GyrB chains. In the heterotetramer, GyrA contains the active site tyrosine that forms a transient covalent intermediate with DNA, while GyrB binds cofactors and catalyzes ATP hydrolysis.

The protein resides in the cytoplasm. The catalysed reaction is ATP-dependent breakage, passage and rejoining of double-stranded DNA.. Functionally, a type II topoisomerase that negatively supercoils closed circular double-stranded (ds) DNA in an ATP-dependent manner to modulate DNA topology and maintain chromosomes in an underwound state. Negative supercoiling favors strand separation, and DNA replication, transcription, recombination and repair, all of which involve strand separation. Also able to catalyze the interconversion of other topological isomers of dsDNA rings, including catenanes and knotted rings. Type II topoisomerases break and join 2 DNA strands simultaneously in an ATP-dependent manner. The chain is DNA gyrase subunit A from Staphylococcus epidermidis (strain ATCC 12228 / FDA PCI 1200).